A 143-amino-acid polypeptide reads, in one-letter code: Putative transcriptional regulatory protein PH0763 (143 aa).

It belongs to the Tfx family.

Functionally, putative transcriptional regulator. This is Putative transcriptional regulatory protein PH0763 from Pyrococcus horikoshii (strain ATCC 700860 / DSM 12428 / JCM 9974 / NBRC 100139 / OT-3).